Reading from the N-terminus, the 101-residue chain is Putative regulatory protein Csac_2087 (101 aa).

Belongs to the RemA family.

The sequence is that of Putative regulatory protein Csac_2087 from Caldicellulosiruptor saccharolyticus (strain ATCC 43494 / DSM 8903 / Tp8T 6331).